Reading from the N-terminus, the 274-residue chain is Sulfur carrier protein FdhD (274 aa).

Cysteine 121 serves as the catalytic Cysteine persulfide intermediate. Residue 258–263 (FSKPGR) coordinates Mo-bis(molybdopterin guanine dinucleotide).

It belongs to the FdhD family.

The protein resides in the cytoplasm. Its function is as follows. Required for formate dehydrogenase (FDH) activity. Acts as a sulfur carrier protein that transfers sulfur from IscS to the molybdenum cofactor prior to its insertion into FDH. The sequence is that of Sulfur carrier protein FdhD from Yersinia pseudotuberculosis serotype IB (strain PB1/+).